Reading from the N-terminus, the 635-residue chain is Threonine--tRNA ligase (635 aa).

A TGS domain is found at 1 to 61 (MIAITLPDGS…DRDAELAIVT (61 aa)). The interval 242 to 533 (DHRKLGKTLD…LLENHAGALP (292 aa)) is catalytic. Zn(2+) contacts are provided by cysteine 333, histidine 384, and histidine 510.

Belongs to the class-II aminoacyl-tRNA synthetase family. As to quaternary structure, homodimer. Zn(2+) serves as cofactor.

It is found in the cytoplasm. It carries out the reaction tRNA(Thr) + L-threonine + ATP = L-threonyl-tRNA(Thr) + AMP + diphosphate + H(+). Its function is as follows. Catalyzes the attachment of threonine to tRNA(Thr) in a two-step reaction: L-threonine is first activated by ATP to form Thr-AMP and then transferred to the acceptor end of tRNA(Thr). Also edits incorrectly charged L-seryl-tRNA(Thr). The sequence is that of Threonine--tRNA ligase from Cupriavidus necator (strain ATCC 17699 / DSM 428 / KCTC 22496 / NCIMB 10442 / H16 / Stanier 337) (Ralstonia eutropha).